The primary structure comprises 489 residues: uncharacterized protein (489 aa).

13 helical membrane passes run 1 to 21 (MNAALIIIFGVLLLSIFLGIR), 40 to 60 (FGTVFVFLLMAGEIYTTFTFL), 74 to 94 (FYIIAYGCLAYILSYWLLPAV), 117 to 137 (PLLGILVSLVGIAALIPYLVL), 158 to 178 (AAIWIGAVSITVYVMVSGIHG), 188 to 208 (IMILVVVLFLGVYLPIHYYGG), 234 to 254 (AWFSSTVLLTALGFYMWPHTF), 271 to 291 (IIMPLYQLVLLFVLFVGFAAI), 318 to 338 (FVGIIGAAGLLTALVPGSMIL), 362 to 382 (VSALAKFLVPVIALISVYFTF), 388 to 408 (IVTLLLMGYSLVTQLFPALLF), 422 to 442 (FAGIIAGVGAVTYITMTETTI), and 456 to 476 (LNVGIVALLLNITVMMAVSLM).

It belongs to the sodium:solute symporter (SSF) (TC 2.A.21) family.

It localises to the cell membrane. This is an uncharacterized protein from Bacillus subtilis (strain 168).